Here is a 461-residue protein sequence, read N- to C-terminus: MSTPTISADTTAQNATSTEVREDVNKRGNIDNYIYGPDERVTTYFVREIRPCAAFSKLPVLLTNGNGMKKFGGTFTMPINASGDYLLSLTAYATLSAGTITGAGDASVVSWLPKLGHKLIKSVKLKIDGKPLVELSSSFMDMWSEFMIDSGNYEAYNNMVGGEYEFNKDRINNKSVVLPIPMYFSRDTGIALPIGAMVNNRVTVEFVFRKVTDLLVLENKPATGAGTGVVRTLTEADFSVVPTIASFEVVADFAVVTDFEIDRTSCTPHYMYMEKPVDVPATELVKPTDGTTAPDTMSFEIEHTNGIVKALFFGVRNITRPEYLDFYKVGLPRFNLGAREDVGTATVSRIGIKCNDKYRVPLLPSEHFVYTEPYHAAKRVPTTNNGLYMYSFALDLHTIDPKGSINPSNFNSNISVVLRPSETLNAATTERFEFNATVLTGYILYVENGNLRKIDNGGDFN.

Residues 1–18 (MSTPTISADTTAQNATST) are compositionally biased toward polar residues. The tract at residues 1–22 (MSTPTISADTTAQNATSTEVRE) is disordered.

The protein localises to the virion. Major protein of the capsid. The polypeptide is Major capsid protein (MCP) (Spodoptera frugiperda ascovirus 1a (SfAV-1a)).